We begin with the raw amino-acid sequence, 456 residues long: MLNDPFQRLGLDREILTVSQLNGRARALLEDVFAQVWVEGEISNLARPASGHLYFTLKDRQAQVRCALFRQNALRVREILRDGLAVRVRGRVSLYEGRGDFQLILDLLEPAGDGALRLAFEALKEKLAAEGLFAAERKRPLPAHPRSIGIVSSPTGAVIRDIVSVFRRRAPQVELTLVPTAVQGREAVAQIVHALELADRQGFDALILARGGGSLEDLWCFNEEVVARAVAACATPVVSAVGHETDVTIADFVADLRAPTPSAAAELLAPDSSDLQRRLDGLQRRLQLRMRHLLAARRLQLDGLSRRLRHPGERLQQQAQRLDDLELRLRRAMQRRLQGDAERLARLDTRLAAQHPERLLGLLRQRLEHLAERLPRAMRSTLRERRQRLEATAQTLQAVSPLATLGRGYAILLDERGRAIRAAVQAHPGQRLHARLAEGALELRVEAAFPSPPQPD.

The protein belongs to the XseA family. As to quaternary structure, heterooligomer composed of large and small subunits.

It localises to the cytoplasm. The enzyme catalyses Exonucleolytic cleavage in either 5'- to 3'- or 3'- to 5'-direction to yield nucleoside 5'-phosphates.. In terms of biological role, bidirectionally degrades single-stranded DNA into large acid-insoluble oligonucleotides, which are then degraded further into small acid-soluble oligonucleotides. The sequence is that of Exodeoxyribonuclease 7 large subunit from Azotobacter vinelandii (strain DJ / ATCC BAA-1303).